A 104-amino-acid polypeptide reads, in one-letter code: Translation initiation factor 1A (104 aa).

Residues 1-14 (MRGQQAPPQQPTRV) are compositionally biased toward low complexity. The segment at 1–20 (MRGQQAPPQQPTRVRTPREN) is disordered. Residues 12 to 87 (TRVRTPRENE…EKCDVIWRYT (76 aa)) enclose the S1-like domain.

It belongs to the eIF-1A family.

Its function is as follows. Seems to be required for maximal rate of protein biosynthesis. Enhances ribosome dissociation into subunits and stabilizes the binding of the initiator Met-tRNA(I) to 40 S ribosomal subunits. The sequence is that of Translation initiation factor 1A (eIF1A) from Methanococcus maripaludis (strain C6 / ATCC BAA-1332).